We begin with the raw amino-acid sequence, 197 residues long: Probable UbiX-like flavin prenyltransferase (197 aa).

Residues 9–11 (GAT), serine 36, 87–90 (SMKT), and arginine 122 contribute to the FMN site.

It belongs to the UbiX/PAD1 family. YclB subfamily. Homododecamer.

The enzyme catalyses dimethylallyl phosphate + FMNH2 = prenylated FMNH2 + phosphate. Its function is as follows. Flavin prenyltransferase that catalyzes the synthesis of the prenylated FMN cofactor (prenyl-FMN) for phenolic acid decarboxylase C. Involved in the decarboxylation and detoxification of phenolic derivatives under both aerobic and anaerobic conditions. The protein is Probable UbiX-like flavin prenyltransferase (ecdB) of Escherichia coli O111:H-.